The sequence spans 331 residues: Junctional sarcoplasmic reticulum protein 1 (331 aa).

2 disordered regions span residues 1-118 (MSMT…EELP) and 157-331 (RVPE…KGRD). Residues 3 to 76 (MTTRAWEELD…EKEPAARGTP (74 aa)) are mediates interaction with CACNA1S. 2 stretches are compositionally biased toward basic and acidic residues: residues 21-35 (LEDH…EDRA) and 61-71 (TRPKKMEKEPA). Composition is skewed to pro residues over residues 103–112 (PLQPPPPPPA) and 161–175 (PWVP…PSSP). 2 stretches are compositionally biased toward basic and acidic residues: residues 222 to 242 (AVRE…PRRE) and 250 to 302 (PRKE…EPRK). Basic residues predominate over residues 320 to 331 (SRQKLRAGKGRD).

Interacts with CACNA1S, CACNB1 and calsequestrin.

It is found in the sarcoplasmic reticulum membrane. It localises to the endoplasmic reticulum membrane. Functionally, involved in skeletal muscle excitation/contraction coupling (EC), probably acting as a regulator of the voltage-sensitive calcium channel CACNA1S. EC is a physiological process whereby an electrical signal (depolarization of the plasma membrane) is converted into a chemical signal, a calcium gradient, by the opening of ryanodine receptor calcium release channels. May regulate CACNA1S membrane targeting and activity. This is Junctional sarcoplasmic reticulum protein 1 (JSRP1) from Homo sapiens (Human).